A 486-amino-acid chain; its full sequence is MAITNKLIITLLLLISIAVVHCLSFRVEIDEFEPPQQGEQEGPRRRPGGGSGEGWEEESTNHPYHFRKRSFSDWFQSKEGFVRVLPKFTKHAPALFRGIENYRFSLVEMEPTTFFVPHHLDADAVFIVLQGKGVIEFVTDKTKESFHITKGDVVRIPSGVTNFITNTNQTVPLRLAQITVPVNNPGNYKDYFPAASQFQQSYFNGFTKEVLSTSFNVPEELLGRLVTRSKEIGQGIIRRISPDQIKELAEHATSPSNKHKAKKEKEEDKDLRTLWTPFNLFAIDPIYSNDFGHFHEAHPKNYNQLQDLHIAAAWANMTQGSLFLPHFNSKTTFVTFVENGCARFEMATPYKFQRGQQQWPGQGQEEEEDMSENVHKVVSRVCKGEVFIVPAGHPFTILSQDQDFIAVGFGIYATNSKRTFLAGEENLLSNLNPAATRVTFGVGSKVAEKLFTSQNYSYFAPTSRSQQQIPEKHKPSFQSILDFAGF.

The first 22 residues, methionine 1–cysteine 22, serve as a signal peptide directing secretion. The segment at proline 34 to threonine 60 is disordered. 2 Cupin type-1 domains span residues tyrosine 64–glycine 223 and phenylalanine 278–glutamate 448. N-linked (GlcNAc...) asparagine glycosylation is found at asparagine 168, asparagine 316, and asparagine 455.

Belongs to the 7S seed storage protein family. In terms of tissue distribution, predominantly expressed in the embryo and endosperm of developing seeds. Also present in seedlings.

Functionally, seed storage protein. In terms of biological role, (Microbial infection) Involved in tobacco mosaic virus (TMV) replication. Required for endoplasmic reticulum (ER) aggregations mediated by TMV main replicase (P126) upon viral infection. The sequence is that of Vicilin-like seed storage protein At3g22640 from Arabidopsis thaliana (Mouse-ear cress).